Consider the following 189-residue polypeptide: MKLLIDFFPIILFFVAFKVWGIYTATAVAIAATVAQIAYLRIRHGRIEPMQWVSLGVIVVFGGATLLSHSETFIKWKPTVLYWLMGGALLVGQLFFRKNLIRTLMGGQMELPDAAWRAMNWSWTAFFAAMGAINLWVAHAFSTDTWVNFKLFGGIGLMAVFVIGQALYLSRYMKEPQDDARTAPEDAKP.

Transmembrane regions (helical) follow at residues 3-23 (LLIDFFPIILFFVAFKVWGIY), 47-67 (IEPMQWVSLGVIVVFGGATLL), 76-96 (WKPTVLYWLMGGALLVGQLFF), 121-141 (WSWTAFFAAMGAINLWVAHAF), and 149-169 (FKLFGGIGLMAVFVIGQALYL).

It belongs to the YciB family.

The protein resides in the cell inner membrane. In terms of biological role, plays a role in cell envelope biogenesis, maintenance of cell envelope integrity and membrane homeostasis. The polypeptide is Inner membrane-spanning protein YciB (Paracidovorax citrulli (strain AAC00-1) (Acidovorax citrulli)).